The chain runs to 365 residues: Glycine oxidase (365 aa).

Residues 12–13 (VI), 32–33 (DQ), 40–41 (SS), 45–47 (GGI), and Ile173 each bind FAD. Arg302 contributes to the substrate binding site. Position 327–333 (327–333 (HYRNGLV)) interacts with FAD.

This sequence belongs to the DAO family. ThiO subfamily. Monomer. The cofactor is FAD.

The catalysed reaction is glycine + O2 + H2O = glyoxylate + H2O2 + NH4(+). The enzyme catalyses sarcosine + O2 + H2O = methylamine + glyoxylate + H2O2. It functions in the pathway cofactor biosynthesis; thiamine diphosphate biosynthesis. Catalyzes the oxidation of glycine, leading to glyoxyl imine and hydrogen peroxide as primary products; glyoxyl imine is used for the biosynthesis of the thiazole ring of thiamine. Otherwise, glyoxyl imine is spontaneously hydrolyzed in water to produce glyoxylate and ammonia. Can also use sarcosine (N-methylglycine) as substrate, and, to a lesser extent, N-ethylglycine and D-proline. Has no activity towards other amino-acids D-Asp, D-Glu, D-Gln, D-His, D-Leu, D-Lys, D-ornithine, D-Trp, D-Val, L-Ala, L-Asp, L-Glu, L-His, L-Leu, L-Lys, L-Met and L-Pro. The polypeptide is Glycine oxidase (Pseudomonas putida (strain ATCC 47054 / DSM 6125 / CFBP 8728 / NCIMB 11950 / KT2440)).